The following is a 126-amino-acid chain: Copper resistance protein C (126 aa).

Positions 1–24 are cleaved as a signal peptide; the sequence is MLLNRTSFVTLFAAGMLVSALAQA. Position 25 (H25) interacts with Cu(2+). Cu(+) is bound by residues M64, M67, M70, H72, and M75. H115 provides a ligand contact to Cu(2+).

Belongs to the CopC family. Monomer.

The protein localises to the periplasm. Its activity is regulated as follows. The redox state of copper bound to CopC may act as a switch between the possible trafficking pathways of the metal ion. Copper-binding protein involved in copper resistance and homeostasis. Probably mediates copper resistance by sequestering the excess of copper in the periplasm. May act as a copper carrier in the oxidizing periplasmic space that exchanges either Cu(I) or Cu(II) with its putative partners CopA, CopB and CopD. This is Copper resistance protein C from Pseudomonas syringae pv. tomato.